We begin with the raw amino-acid sequence, 148 residues long: Ubiquitin-conjugating enzyme E2 11 (148 aa).

A UBC core domain is found at 1–147 (MASKRILKEL…ARSWTQKYAM (147 aa)). The Glycyl thioester intermediate role is filled by Cys85.

The protein belongs to the ubiquitin-conjugating enzyme family. Interacts with the E3 ubiquitin-protein ligases MBR1 and MBR2. Ubiquitously expressed. Mainly in petals.

The catalysed reaction is S-ubiquitinyl-[E1 ubiquitin-activating enzyme]-L-cysteine + [E2 ubiquitin-conjugating enzyme]-L-cysteine = [E1 ubiquitin-activating enzyme]-L-cysteine + S-ubiquitinyl-[E2 ubiquitin-conjugating enzyme]-L-cysteine.. Its pathway is protein modification; protein ubiquitination. Its function is as follows. Accepts the ubiquitin from the E1 complex and catalyzes its covalent attachment to other proteins. Mediates the selective degradation of short-lived and abnormal proteins. This is Ubiquitin-conjugating enzyme E2 11 (UBC11) from Arabidopsis thaliana (Mouse-ear cress).